Reading from the N-terminus, the 291-residue chain is 4-diphosphocytidyl-2-C-methyl-D-erythritol kinase (291 aa).

Lys11 is an active-site residue. Residue 97–107 (PVAAGIGGGSS) participates in ATP binding. The active site involves Asp139.

The protein belongs to the GHMP kinase family. IspE subfamily.

The catalysed reaction is 4-CDP-2-C-methyl-D-erythritol + ATP = 4-CDP-2-C-methyl-D-erythritol 2-phosphate + ADP + H(+). It functions in the pathway isoprenoid biosynthesis; isopentenyl diphosphate biosynthesis via DXP pathway; isopentenyl diphosphate from 1-deoxy-D-xylulose 5-phosphate: step 3/6. Catalyzes the phosphorylation of the position 2 hydroxy group of 4-diphosphocytidyl-2C-methyl-D-erythritol. This is 4-diphosphocytidyl-2-C-methyl-D-erythritol kinase from Methylorubrum extorquens (strain CM4 / NCIMB 13688) (Methylobacterium extorquens).